The sequence spans 445 residues: Ribosomal protein uS12 methylthiotransferase RimO (445 aa).

The region spanning 4 to 119 (YKVGMVSLGC…INEAIMNFIN (116 aa)) is the MTTase N-terminal domain. [4Fe-4S] cluster is bound by residues Cys-13, Cys-48, Cys-82, Cys-157, Cys-161, and Cys-164. Residues 143-373 (TTDKATAYLR…MLLQKELSEE (231 aa)) form the Radical SAM core domain. In terms of domain architecture, TRAM spans 376-441 (KNKLGREYDV…EYDLVGVVCN (66 aa)).

It belongs to the methylthiotransferase family. RimO subfamily. It depends on [4Fe-4S] cluster as a cofactor.

Its subcellular location is the cytoplasm. The catalysed reaction is L-aspartate(89)-[ribosomal protein uS12]-hydrogen + (sulfur carrier)-SH + AH2 + 2 S-adenosyl-L-methionine = 3-methylsulfanyl-L-aspartate(89)-[ribosomal protein uS12]-hydrogen + (sulfur carrier)-H + 5'-deoxyadenosine + L-methionine + A + S-adenosyl-L-homocysteine + 2 H(+). In terms of biological role, catalyzes the methylthiolation of an aspartic acid residue of ribosomal protein uS12. This chain is Ribosomal protein uS12 methylthiotransferase RimO, found in Clostridium perfringens (strain SM101 / Type A).